A 153-amino-acid chain; its full sequence is Arginine repressor (153 aa).

Belongs to the ArgR family.

The protein localises to the cytoplasm. It participates in amino-acid biosynthesis; L-arginine biosynthesis [regulation]. In terms of biological role, regulates arginine biosynthesis genes. The polypeptide is Arginine repressor (Syntrophomonas wolfei subsp. wolfei (strain DSM 2245B / Goettingen)).